The following is a 414-amino-acid chain: Collagenase (414 aa).

Belongs to the peptidase U32 family. As to quaternary structure, homodimer. A metal cation serves as cofactor.

In terms of biological role, has collagenase activity. Hydrolyzes type I collagen. May play a role in virulence. The polypeptide is Collagenase (prtC) (Porphyromonas gingivalis (strain ATCC BAA-308 / W83)).